Consider the following 106-residue polypeptide: Cell division protein FtsB (106 aa).

Residues 1 to 3 (MRL) are Cytoplasmic-facing. A helical transmembrane segment spans residues 4-21 (LTLIFVALIALLQYPLWL). Topologically, residues 22-106 (GKGSWLRVWD…SPPAALTGAQ (85 aa)) are periplasmic. Residues 31–73 (DLNQKIVAQKAVNAELKLRNDTLDAEVRDLKQGNAAIEERARS) adopt a coiled-coil conformation.

The protein belongs to the FtsB family. Part of a complex composed of FtsB, FtsL and FtsQ.

The protein resides in the cell inner membrane. In terms of biological role, essential cell division protein. May link together the upstream cell division proteins, which are predominantly cytoplasmic, with the downstream cell division proteins, which are predominantly periplasmic. The chain is Cell division protein FtsB from Methylobacillus flagellatus (strain ATCC 51484 / DSM 6875 / VKM B-1610 / KT).